The following is a 149-amino-acid chain: 3-dehydroquinate dehydratase (149 aa).

Catalysis depends on Y22, which acts as the Proton acceptor. Substrate-binding residues include N73, H79, and D86. Catalysis depends on H99, which acts as the Proton donor. Substrate-binding positions include 100-101 and R110; that span reads LS.

It belongs to the type-II 3-dehydroquinase family. In terms of assembly, homododecamer.

It catalyses the reaction 3-dehydroquinate = 3-dehydroshikimate + H2O. Its pathway is metabolic intermediate biosynthesis; chorismate biosynthesis; chorismate from D-erythrose 4-phosphate and phosphoenolpyruvate: step 3/7. Functionally, catalyzes a trans-dehydration via an enolate intermediate. The polypeptide is 3-dehydroquinate dehydratase (Prochlorococcus marinus (strain SARG / CCMP1375 / SS120)).